Consider the following 507-residue polypeptide: Sugar transport protein 8 (507 aa).

Residues 1 to 21 (MAVVISSNGNSKSFDAKMTVY) lie on the Cytoplasmic side of the membrane. 12 helical membrane passes run 22–42 (VFIC…DIGI), 79–99 (FLQL…FFAS), 116–136 (IFFL…MLII), 139–159 (ILLG…LSEI), 166–186 (GGLN…ANIV), 200–220 (IALG…LLIC), 281–301 (FVIG…AIMF), 319–339 (LSAV…IFLV), 346–366 (FLLL…GIIL), 382–402 (LVVV…WGPL), 419–439 (GFAL…QAFL), and 448–468 (GIFF…LFFV). Over 469–507 (PETKGVSIDDMRDSVWKLHWYWKRFMLEEDEHDVEKRTD) the chain is Cytoplasmic.

Belongs to the major facilitator superfamily. Sugar transporter (TC 2.A.1.1) family.

The protein localises to the membrane. Mediates an active uptake of hexoses, probably by sugar/hydrogen symport. The chain is Sugar transport protein 8 (STP8) from Arabidopsis thaliana (Mouse-ear cress).